We begin with the raw amino-acid sequence, 529 residues long: Bifunctional purine biosynthesis protein PurH (529 aa).

An MGS-like domain is found at 1–148 (MQQRRPVRRA…KNHRDVAIVV (148 aa)). Lysine 287 carries the N6-acetyllysine modification.

It belongs to the PurH family.

The catalysed reaction is (6R)-10-formyltetrahydrofolate + 5-amino-1-(5-phospho-beta-D-ribosyl)imidazole-4-carboxamide = 5-formamido-1-(5-phospho-D-ribosyl)imidazole-4-carboxamide + (6S)-5,6,7,8-tetrahydrofolate. It carries out the reaction IMP + H2O = 5-formamido-1-(5-phospho-D-ribosyl)imidazole-4-carboxamide. It participates in purine metabolism; IMP biosynthesis via de novo pathway; 5-formamido-1-(5-phospho-D-ribosyl)imidazole-4-carboxamide from 5-amino-1-(5-phospho-D-ribosyl)imidazole-4-carboxamide (10-formyl THF route): step 1/1. It functions in the pathway purine metabolism; IMP biosynthesis via de novo pathway; IMP from 5-formamido-1-(5-phospho-D-ribosyl)imidazole-4-carboxamide: step 1/1. The protein is Bifunctional purine biosynthesis protein PurH of Escherichia coli O6:K15:H31 (strain 536 / UPEC).